A 100-amino-acid polypeptide reads, in one-letter code: Ferredoxin-2 (100 aa).

One can recognise a 2Fe-2S ferredoxin-type domain in the interval 4 to 97; that stretch reads YKVTLINEEE…DCTIMTHQES (94 aa). The [2Fe-2S] cluster site is built by cysteine 42, cysteine 47, cysteine 50, and cysteine 81.

It belongs to the 2Fe2S plant-type ferredoxin family. It depends on [2Fe-2S] cluster as a cofactor.

Its function is as follows. Ferredoxins are iron-sulfur proteins that transfer electrons in a wide variety of metabolic reactions. The chain is Ferredoxin-2 from Aphanothece sacrum.